The following is a 311-amino-acid chain: HPr kinase/phosphorylase (311 aa).

Catalysis depends on residues histidine 138 and lysine 159. 153-160 serves as a coordination point for ATP; sequence GDSGIGKS. Serine 160 lines the Mg(2+) pocket. The Proton acceptor; for phosphorylation activity. Proton donor; for dephosphorylation activity role is filled by aspartate 177. The tract at residues 201–210 is important for the catalytic mechanism of both phosphorylation and dephosphorylation; sequence IEIRGVGIID. Glutamate 202 serves as a coordination point for Mg(2+). Arginine 243 is an active-site residue. The interval 264–269 is important for the catalytic mechanism of dephosphorylation; it reads PVKTGR.

It belongs to the HPrK/P family. As to quaternary structure, homohexamer. The cofactor is Mg(2+).

The catalysed reaction is [HPr protein]-L-serine + ATP = [HPr protein]-O-phospho-L-serine + ADP + H(+). It carries out the reaction [HPr protein]-O-phospho-L-serine + phosphate + H(+) = [HPr protein]-L-serine + diphosphate. Catalyzes the ATP- as well as the pyrophosphate-dependent phosphorylation of a specific serine residue in HPr, a phosphocarrier protein of the phosphoenolpyruvate-dependent sugar phosphotransferase system (PTS). HprK/P also catalyzes the pyrophosphate-producing, inorganic phosphate-dependent dephosphorylation (phosphorolysis) of seryl-phosphorylated HPr (P-Ser-HPr). The two antagonistic activities of HprK/P are regulated by several intracellular metabolites, which change their concentration in response to the absence or presence of rapidly metabolisable carbon sources (glucose, fructose, etc.) in the growth medium. Therefore, by controlling the phosphorylation state of HPr, HPrK/P is a sensor enzyme that plays a major role in the regulation of carbon metabolism and sugar transport: it mediates carbon catabolite repression (CCR), and regulates PTS-catalyzed carbohydrate uptake and inducer exclusion. The protein is HPr kinase/phosphorylase of Streptococcus pneumoniae (strain 70585).